The sequence spans 428 residues: RNA-binding protein 34 (428 aa).

2 disordered regions span residues 1 to 106 (MALR…KVKV) and 127 to 152 (DLEE…TDGE). Position 147 is an N6-acetyllysine (lysine 147). RRM domains follow at residues 183 to 278 (RTVF…LASE) and 285 to 362 (RSVF…RSVN). Lysine 240 is covalently cross-linked (Glycyl lysine isopeptide (Lys-Gly) (interchain with G-Cter in SUMO2)). Residue serine 286 is modified to Phosphoserine. The disordered stretch occupies residues 361–428 (VNKEKLKQQN…GQTKKPRKQK (68 aa)). Basic residues predominate over residues 408–428 (LMKKKKGQKKKGQTKKPRKQK).

The protein belongs to the RRM RBM34 family.

Its subcellular location is the nucleus. The protein localises to the nucleolus. The polypeptide is RNA-binding protein 34 (Rbm34) (Rattus norvegicus (Rat)).